The primary structure comprises 156 residues: Ribosomal RNA large subunit methyltransferase H (156 aa).

Residues leucine 73, glycine 104, and 123-128 (LSRLTL) each bind S-adenosyl-L-methionine.

This sequence belongs to the RNA methyltransferase RlmH family. Homodimer.

It localises to the cytoplasm. The catalysed reaction is pseudouridine(1915) in 23S rRNA + S-adenosyl-L-methionine = N(3)-methylpseudouridine(1915) in 23S rRNA + S-adenosyl-L-homocysteine + H(+). Its function is as follows. Specifically methylates the pseudouridine at position 1915 (m3Psi1915) in 23S rRNA. The chain is Ribosomal RNA large subunit methyltransferase H from Thiobacillus denitrificans (strain ATCC 25259 / T1).